Reading from the N-terminus, the 175-residue chain is Pre-mRNA-splicing factor SNT309 (175 aa).

Belongs to the NTC complex (or PRP19-associated complex), composed of at least CEF1, CLF1, ISY1, NTC20, SNT309, SYF1, SYF2, and PRP19. The NTC complex associates with the spliceosome after the release of the U1 and U4 snRNAs and forms the CWC spliceosome subcomplex (or CEF1-associated complex) reminiscent of a late-stage spliceosome composed also of the U2, U5 and U6 snRNAs and at least BUD13, BUD31, BRR2, CDC40, CUS1, CWC2, CWC15, CWC21, CWC22, CWC23, CWC24, CWC25, CWC27, ECM2, HSH155, IST3, LEA1, MSL1, PRP8, PRP9, PRP11, PRP21, PRP22, PRP45, PRP46, SLU7, SMB1, SMD1, SMD2, SMD3, SMX2, SMX3, SNU114, SPP2, RSE1 and YJU2. Interacts with PRP19.

The protein resides in the nucleus. In terms of biological role, involved in pre-mRNA splicing by stabilizing the NTC (or PRP19-associated complex). As a component of the NTC complex, associates to the spliceosome to mediate conformational rearrangement or to stabilize the structure of the spliceosome after U4 snRNA dissociation, which leads to spliceosome maturation. The polypeptide is Pre-mRNA-splicing factor SNT309 (SNT309) (Saccharomyces cerevisiae (strain ATCC 204508 / S288c) (Baker's yeast)).